The chain runs to 1483 residues: MIERGKFRSLTLINWNGFFARTFDLDELVTTLSGGNGAGKSTTMAAFVTALIPDLTLLHFRNTTEAGATSGSRDKGLHGKLKVGVCYSMLDTINSRHQRVVVGVRLQQVAGRDRKVDIKPFAIQGLPMSVQPTQLVTETLNERQARVLPLNELKDKLEAMEGVQFKQFNSITDYHSLMFDLGIIARRLRSASDRSKFYRLIEASLYGGISSAITRSLRDYLLPENSGVRKAFQDMEAALRENRMTLEAIRVTQSDRDLFKHLISEATNYVAADYMRHANERRVHLDKALEFRRELYTSRQQLAAEQYKHVDMARELAEHNGAEGDLEADYQAASDHLNLVQTALRQQEKIERYEADLDELQIRLEEQNEVVAEAIERQEENEARAEAAELEVDELKSQLADYQQALDVQQTRAIQYNQAIAALNRAKELCHLPDLTADSAAEWLETFQAKELEATEKMLSLEQKMSMAQTAHSQFEQAYQLVVAINGPLARNEAWDVARELLREGVEQRHLAEQVQPLRMRLSELEQRLREQQEAERLLADFCKRQGKNFDIDELEALHQELEARIASLSDSVSNAREERMALCQEQEQLQSRIQSLMQRAPVWLAAQNSLNQLSEQCGEEFSSSQDVTEYLQQLLEREREAIVERDEVGARKNAVDEEIERLSQPGGSEDQRLNALAERFGGVLLSEIYDDVSLEDAPYFSALYGPSRHAIVVPDLSQVTEHLEGLTDCPEDLYLIEGDPQSFDDSVFSVDELEKAVVVKIADRQWRYSRFPEVPLFGRAACESRIESLHAEREVLSERFATLSFDVQKTQRLHQAFSRFIGSHLAVAFESDPEPEIRQLNSRRVELERALSNHENDNQQQRIQFEQAKEGVTALNRILPRLNLLADDSLADRVDEIRERLDEAQEAARFVQQFGNQLAKLEPIVSVLQSDPEQFEQLKEDYAYSQQMQRDARQQAFALTEVVQRRAHFSYSDSAEMLSGNSDLNEKLRERLEQAEAERTRAREALRGHAAQLSQYNQVLASLKSSYDTKKELLNDLQRELQDIGVRADSGAEERARIRRDELHAQLSNNRSRRNQLEKALTFCEAEMDNLTRKLRRLERDYFEMREQVVTAKAGWCAVMRMVKDNGVERRLHRRELAYLSADDLRSMSDKALGALRLAVADNEHLRDVLRMSEDPKRPERKIQFFVAVYQHLRERIRQDIIRTDDPVEAIEQMEIELSRLTEELTSREQKLAISSRSVANIIRKTIQREQNRIRILNQGLQNVSFGQVNSVRLNVNVRETHAMLLDVLSEQHEQHQDLFNSNRLTFSEALAKLYQRLNPQIDMGQRTPQTIGEELLDYRNYLEMEVEVNRGSDGWLRAESGALSTGEAIGTGMSILVMVVQSWEDESRRLRGKDISPCRLLFLDEAARLDARSIATLFELCERLQMQLIIAAPENISPEKGTTYKLVRKVFQNTEHVHVVGLRGFAPQLPETLPGSDEAPS.

An ATP-binding site is contributed by 34–41; it reads GGNGAGKS. 7 coiled-coil regions span residues 326–418, 444–480, 509–601, 780–804, 837–923, 977–1115, and 1209–1265; these read LEAD…QYNQ, LETF…QAYQ, RHLA…MQRA, RAAC…FATL, EIRQ…AKLE, EMLS…TAKA, and VEAI…LQNV. A flexible hinge region spans residues 666–783; sequence PGGSEDQRLN…EVPLFGRAAC (118 aa).

It belongs to the SMC family. MukB subfamily. In terms of assembly, homodimerization via its hinge domain. Binds to DNA via its C-terminal region. Interacts, and probably forms a ternary complex, with MukE and MukF via its C-terminal region. The complex formation is stimulated by calcium or magnesium. Interacts with tubulin-related protein FtsZ.

Its subcellular location is the cytoplasm. It localises to the nucleoid. Its function is as follows. Plays a central role in chromosome condensation, segregation and cell cycle progression. Functions as a homodimer, which is essential for chromosome partition. Involved in negative DNA supercoiling in vivo, and by this means organize and compact chromosomes. May achieve or facilitate chromosome segregation by condensation DNA from both sides of a centrally located replisome during cell division. The protein is Chromosome partition protein MukB of Shigella dysenteriae serotype 1 (strain Sd197).